A 192-amino-acid chain; its full sequence is Thymidylate kinase (192 aa).

Residue 7-14 (GIDCVGKS) participates in ATP binding.

Belongs to the thymidylate kinase family.

The enzyme catalyses dTMP + ATP = dTDP + ADP. Functionally, phosphorylation of dTMP to form dTDP in both de novo and salvage pathways of dTTP synthesis. This chain is Thymidylate kinase, found in Campylobacter jejuni subsp. jejuni serotype O:23/36 (strain 81-176).